Reading from the N-terminus, the 333-residue chain is Thiamine-monophosphate kinase (333 aa).

Mg(2+)-binding residues include D35, T50, and D51. H58 is a binding site for substrate. Mg(2+) is bound at residue D80. ATP-binding positions include Y111, G128–D129, and R153. D129 is a binding site for Mg(2+). D230 is a Mg(2+) binding site. An ATP-binding site is contributed by S232. D233 contacts Mg(2+). Residues E278 and F330 each contribute to the substrate site.

The protein belongs to the thiamine-monophosphate kinase family.

It carries out the reaction thiamine phosphate + ATP = thiamine diphosphate + ADP. Its pathway is cofactor biosynthesis; thiamine diphosphate biosynthesis; thiamine diphosphate from thiamine phosphate: step 1/1. In terms of biological role, catalyzes the ATP-dependent phosphorylation of thiamine-monophosphate (TMP) to form thiamine-pyrophosphate (TPP), the active form of vitamin B1. This Prochlorococcus marinus (strain SARG / CCMP1375 / SS120) protein is Thiamine-monophosphate kinase.